The following is a 433-amino-acid chain: L-saccharopine oxidase (433 aa).

Residues 1–18 form the signal peptide; it reads MSRTIVIVGCGVFGLSTA. 4 N-linked (GlcNAc...) asparagine glycosylation sites follow: asparagine 24, asparagine 119, asparagine 188, and asparagine 229.

It belongs to the MSOX/MTOX family. In terms of assembly, monomer. FAD is required as a cofactor.

The protein localises to the secreted. Its subcellular location is the cytoplasm. It localises to the nucleus. It catalyses the reaction L-saccharopine + O2 + H2O = (S)-2-amino-6-oxohexanoate + L-glutamate + H2O2. In Schizosaccharomyces pombe (strain 972 / ATCC 24843) (Fission yeast), this protein is L-saccharopine oxidase.